Reading from the N-terminus, the 456-residue chain is MEQLKEKFEPLFSVLPQVKSPGYRVPFREKLKWTGIILVLYFFLAQIPLYGLSANAVDQFAQFRAVLAGNFGSILTLGIGPIVSASIILQLLVGGKILKLDLSRHEDKAFFQGLQKLLAIVFTFFEALIFVLTGSLAPSAPQFVWVLILQLTIGGILIIFLDEVVSKWGFGSGVGLFIAAGVSQEIIVGAFNPLSAPTQPGVPAGRITGFLYLLFTGQSPDFQYYVLPVLALIAVFLVVVYAESMRVEIPISMGGGKRLSRGAVGKYPLRFIYASNMPVILTSALLLNVQLLANVFQKLGYPILGTVSNGQAVDGLAYLLTAPRSIDALILDPFRVVFYAVVFIGLCVLFAWLWVEISNIGPRHVARQLYQMGMQIPGFRSSRGQFEKILKRYIPTITILGGAFVGLLAFVADLTGSLGGGTGVLLTVGIVYRLYEEIAQEQLMDMHPILRSFLGD.

The Cytoplasmic portion of the chain corresponds to 1 to 21; it reads MEQLKEKFEPLFSVLPQVKSP. A helical membrane pass occupies residues 22-48; the sequence is GYRVPFREKLKWTGIILVLYFFLAQIP. Topologically, residues 49–59 are extracellular; it reads LYGLSANAVDQ. The segment at residues 60 to 67 is an intramembrane region (helical); it reads FAQFRAVL. A discontinuously helical membrane pass occupies residues 60 to 88; it reads FAQFRAVLAGNFGSILTLGIGPIVSASII. The stretch at 68-79 is an intramembrane region; it reads AGNFGSILTLGI. The segment at residues 80–88 is an intramembrane region (helical); that stretch reads GPIVSASII. Topologically, residues 89–109 are cytoplasmic; it reads LQLLVGGKILKLDLSRHEDKA. The helical transmembrane segment at 110–134 threads the bilayer; sequence FFQGLQKLLAIVFTFFEALIFVLTG. Over 135–141 the chain is Extracellular; it reads SLAPSAP. Residues 142-166 form a helical membrane-spanning segment; sequence QFVWVLILQLTIGGILIIFLDEVVS. The Cytoplasmic segment spans residues 167–172; the sequence is KWGFGS. The chain crosses the membrane as a helical span at residues 173–191; that stretch reads GVGLFIAAGVSQEIIVGAF. The Extracellular segment spans residues 192 to 224; that stretch reads NPLSAPTQPGVPAGRITGFLYLLFTGQSPDFQY. The helical transmembrane segment at 225–246 threads the bilayer; the sequence is YVLPVLALIAVFLVVVYAESMR. Residues 247–275 are Cytoplasmic-facing; the sequence is VEIPISMGGGKRLSRGAVGKYPLRFIYAS. The chain crosses the membrane as a helical span at residues 276-297; it reads NMPVILTSALLLNVQLLANVFQ. The Extracellular segment spans residues 298–334; the sequence is KLGYPILGTVSNGQAVDGLAYLLTAPRSIDALILDPF. A helical transmembrane segment spans residues 335 to 354; the sequence is RVVFYAVVFIGLCVLFAWLW. The Cytoplasmic portion of the chain corresponds to 355 to 397; that stretch reads VEISNIGPRHVARQLYQMGMQIPGFRSSRGQFEKILKRYIPTI. Residues 398-416 traverse the membrane as a helical segment; sequence TILGGAFVGLLAFVADLTG. Over 417–419 the chain is Extracellular; sequence SLG. A helical transmembrane segment spans residues 420–434; that stretch reads GGTGVLLTVGIVYRL. At 435 to 456 the chain is on the cytoplasmic side; that stretch reads YEEIAQEQLMDMHPILRSFLGD.

The protein belongs to the SecY/SEC61-alpha family. In terms of assembly, component of the Sec protein translocase complex. Heterotrimer consisting of alpha (SecY), beta (SecG) and gamma (SecE) subunits. The heterotrimers can form oligomers, although 1 heterotrimer is thought to be able to translocate proteins. Interacts with the ribosome. May interact with SecDF, and other proteins may be involved.

The protein resides in the cell membrane. Functionally, the central subunit of the protein translocation channel SecYEG. Consists of two halves formed by TMs 1-5 and 6-10. These two domains form a lateral gate at the front which open onto the bilayer between TMs 2 and 7, and are clamped together by SecE at the back. The channel is closed by both a pore ring composed of hydrophobic SecY resides and a short helix (helix 2A) on the extracellular side of the membrane which forms a plug. The plug probably moves laterally to allow the channel to open. The ring and the pore may move independently. This Methanothermobacter thermautotrophicus (strain ATCC 29096 / DSM 1053 / JCM 10044 / NBRC 100330 / Delta H) (Methanobacterium thermoautotrophicum) protein is Protein translocase subunit SecY.